Consider the following 908-residue polypeptide: Protein translocase subunit SecA (908 aa).

ATP is bound by residues Q87, 105 to 109, and D512; that span reads GEGKT. The interval 860-908 is disordered; the sequence is AESLVGSSDEHEAVTAQAPMIRDGEKVGRNDPCPCGSGRKYKQCHGKLS. 4 residues coordinate Zn(2+): C892, C894, C903, and H904. The span at 898-908 shows a compositional bias: basic residues; it reads RKYKQCHGKLS.

It belongs to the SecA family. Monomer and homodimer. Part of the essential Sec protein translocation apparatus which comprises SecA, SecYEG and auxiliary proteins SecDF-YajC and YidC. Zn(2+) serves as cofactor.

It localises to the cell inner membrane. The protein resides in the cytoplasm. It catalyses the reaction ATP + H2O + cellular proteinSide 1 = ADP + phosphate + cellular proteinSide 2.. In terms of biological role, part of the Sec protein translocase complex. Interacts with the SecYEG preprotein conducting channel. Has a central role in coupling the hydrolysis of ATP to the transfer of proteins into and across the cell membrane, serving both as a receptor for the preprotein-SecB complex and as an ATP-driven molecular motor driving the stepwise translocation of polypeptide chains across the membrane. This chain is Protein translocase subunit SecA, found in Shewanella baltica (strain OS155 / ATCC BAA-1091).